The sequence spans 191 residues: Peptidyl-tRNA hydrolase (191 aa).

Tyr14 is a binding site for tRNA. His19 serves as the catalytic Proton acceptor. TRNA is bound by residues Tyr64, Asn66, and Asn112.

The protein belongs to the PTH family. Monomer.

It is found in the cytoplasm. The catalysed reaction is an N-acyl-L-alpha-aminoacyl-tRNA + H2O = an N-acyl-L-amino acid + a tRNA + H(+). Its function is as follows. Hydrolyzes ribosome-free peptidyl-tRNAs (with 1 or more amino acids incorporated), which drop off the ribosome during protein synthesis, or as a result of ribosome stalling. In terms of biological role, catalyzes the release of premature peptidyl moieties from peptidyl-tRNA molecules trapped in stalled 50S ribosomal subunits, and thus maintains levels of free tRNAs and 50S ribosomes. The sequence is that of Peptidyl-tRNA hydrolase from Clostridium botulinum (strain Alaska E43 / Type E3).